The following is a 339-amino-acid chain: 5-dehydro-2-deoxygluconokinase (339 aa).

It belongs to the carbohydrate kinase PfkB family.

The enzyme catalyses 5-dehydro-2-deoxy-D-gluconate + ATP = 6-phospho-5-dehydro-2-deoxy-D-gluconate + ADP + H(+). It participates in polyol metabolism; myo-inositol degradation into acetyl-CoA; acetyl-CoA from myo-inositol: step 5/7. Its function is as follows. Catalyzes the phosphorylation of 5-dehydro-2-deoxy-D-gluconate (2-deoxy-5-keto-D-gluconate or DKG) to 6-phospho-5-dehydro-2-deoxy-D-gluconate (DKGP). In Clostridium beijerinckii (strain ATCC 51743 / NCIMB 8052) (Clostridium acetobutylicum), this protein is 5-dehydro-2-deoxygluconokinase.